Reading from the N-terminus, the 464-residue chain is tRNA modification GTPase MnmE (464 aa).

The (6S)-5-formyl-5,6,7,8-tetrahydrofolate site is built by Arg-27, Glu-90, and Lys-129. Residues 222 to 384 enclose the TrmE-type G domain; it reads GITLVLAGSV…LYDKIRTLIS (163 aa). GTP-binding positions include 232–237, 251–257, and 276–279; these read NAGKSS, SSYPGTT, and DTAG. Mg(2+) contacts are provided by Ser-236 and Thr-257. Residue Lys-464 coordinates (6S)-5-formyl-5,6,7,8-tetrahydrofolate.

It belongs to the TRAFAC class TrmE-Era-EngA-EngB-Septin-like GTPase superfamily. TrmE GTPase family. As to quaternary structure, homodimer. Heterotetramer of two MnmE and two MnmG subunits. The cofactor is K(+).

It localises to the cytoplasm. Exhibits a very high intrinsic GTPase hydrolysis rate. Involved in the addition of a carboxymethylaminomethyl (cmnm) group at the wobble position (U34) of certain tRNAs, forming tRNA-cmnm(5)s(2)U34. This Borreliella afzelii (strain PKo) (Borrelia afzelii) protein is tRNA modification GTPase MnmE.